The sequence spans 335 residues: 1D-myo-inositol 2-acetamido-2-deoxy-alpha-D-glucopyranoside deacetylase (335 aa).

Positions 19, 22, and 158 each coordinate Zn(2+).

Belongs to the MshB deacetylase family. Requires Zn(2+) as cofactor.

The enzyme catalyses 1D-myo-inositol 2-acetamido-2-deoxy-alpha-D-glucopyranoside + H2O = 1D-myo-inositol 2-amino-2-deoxy-alpha-D-glucopyranoside + acetate. In terms of biological role, catalyzes the deacetylation of 1D-myo-inositol 2-acetamido-2-deoxy-alpha-D-glucopyranoside (GlcNAc-Ins) in the mycothiol biosynthesis pathway. In Corynebacterium urealyticum (strain ATCC 43042 / DSM 7109), this protein is 1D-myo-inositol 2-acetamido-2-deoxy-alpha-D-glucopyranoside deacetylase.